The following is a 370-amino-acid chain: Versatile peroxidase VPS1 (370 aa).

Residues 1-20 form the signal peptide; the sequence is MAFAKLSAFVLALGATVALG. Residues 21–31 constitute a propeptide that is removed on maturation; sequence ESPTHRCLNKR. Intrachain disulfides connect cysteine 34-cysteine 46, cysteine 45-cysteine 315, cysteine 65-cysteine 151, and cysteine 279-cysteine 344. Residues glutamate 67 and glutamate 71 each contribute to the Mn(2+) site. The active-site Proton acceptor is histidine 78. Ca(2+)-binding residues include aspartate 79, glycine 97, aspartate 99, and serine 101. Asparagine 133 is a glycosylation site (N-linked (GlcNAc...) asparagine). Tryptophan 201 acts as the Tryptophan radical intermediate in catalysis. Histidine 206 contributes to the heme b binding site. Threonine 207 is a binding site for Ca(2+). Position 210–214 (210–214) interacts with heme b; the sequence is AADHV. Aspartate 212 contacts Mn(2+). Ca(2+) contacts are provided by aspartate 224, threonine 226, threonine 229, and aspartate 231.

Belongs to the peroxidase family. Ligninase subfamily. Heme b is required as a cofactor. Requires Ca(2+) as cofactor.

Its subcellular location is the secreted. It catalyses the reaction 1-(4-hydroxy-3-methoxyphenyl)-2-(2-methoxyphenoxy)propane-1,3-diol + H2O2 = guaiacol + vanillin + glycolaldehyde + H2O. The enzyme catalyses 2 Mn(2+) + H2O2 + 2 H(+) = 2 Mn(3+) + 2 H2O. A versatile ligninolytic peroxidase that combines the substrate specificity characteristics of the two other ligninolytic peroxidases, manganese peroxidase and lignin peroxidase. The protein is Versatile peroxidase VPS1 (vps1) of Pleurotus eryngii (Boletus of the steppes).